We begin with the raw amino-acid sequence, 215 residues long: Nucleoside triphosphate pyrophosphatase (215 aa).

Aspartate 77 (proton acceptor) is an active-site residue.

It belongs to the Maf family. It depends on a divalent metal cation as a cofactor.

The protein resides in the cytoplasm. It catalyses the reaction a ribonucleoside 5'-triphosphate + H2O = a ribonucleoside 5'-phosphate + diphosphate + H(+). The catalysed reaction is a 2'-deoxyribonucleoside 5'-triphosphate + H2O = a 2'-deoxyribonucleoside 5'-phosphate + diphosphate + H(+). In terms of biological role, nucleoside triphosphate pyrophosphatase. May have a dual role in cell division arrest and in preventing the incorporation of modified nucleotides into cellular nucleic acids. The sequence is that of Nucleoside triphosphate pyrophosphatase from Rickettsia peacockii (strain Rustic).